A 505-amino-acid polypeptide reads, in one-letter code: Metal transporter Nramp3.2 (505 aa).

The next 12 helical transmembrane spans lie at 50–70, 78–98, 127–147, 159–179, 187–207, 233–253, 280–300, 321–341, 369–389, 400–420, 439–459, and 466–486; these read LWLFTGPGFLMSIAFLDPGNL, AIAGYSLLWLLLWATAMGLLV, MVLWIMAELALIGADIQEVIG, FVPLWAGVTITACDCFIFLFL, LEAVFAVLIGIMAVTFGWMFA, AVGVVGCIIMPHNVFLHSALV, ALVISFVINLFVTTVFAKGFY, YGGGFFPILYIWGIGLLAAGQ, ALITRSCAIIPTMIVALVFDT, WLNVLQSIQIPFALIPLLCLV, AWLVAALVMVINGYLLLDFFF, and AFTTVVCGFTGAYVAFIIYLI.

It belongs to the NRAMP (TC 2.A.55) family. In terms of tissue distribution, expressed in roots, stems, buds and leaves.

Its subcellular location is the vacuole membrane. It carries out the reaction Mn(2+)(in) = Mn(2+)(out). The enzyme catalyses Fe(2+)(in) = Fe(2+)(out). Functionally, divalent metal transporter. Can transport manganese (Mn) and iron (Fe). Involved in the release of metals stored in the vacuole. In Populus trichocarpa (Western balsam poplar), this protein is Metal transporter Nramp3.2.